A 212-amino-acid polypeptide reads, in one-letter code: Inner membrane-spanning protein YciB (212 aa).

The next 5 helical transmembrane spans lie at 49-69, 78-98, 105-125, 150-170, and 178-198; these read APVL…VLYL, TMLW…IWFH, WKPS…PIVA, LAWA…AYNF, and FKAF…GLYM.

It belongs to the YciB family.

The protein localises to the cell inner membrane. In terms of biological role, plays a role in cell envelope biogenesis, maintenance of cell envelope integrity and membrane homeostasis. This is Inner membrane-spanning protein YciB from Leptothrix cholodnii (strain ATCC 51168 / LMG 8142 / SP-6) (Leptothrix discophora (strain SP-6)).